Consider the following 239-residue polypeptide: Probable transcriptional regulatory protein lmo0369 (239 aa).

It belongs to the TACO1 family. YeeN subfamily.

The protein resides in the cytoplasm. The chain is Probable transcriptional regulatory protein lmo0369 from Listeria monocytogenes serovar 1/2a (strain ATCC BAA-679 / EGD-e).